The primary structure comprises 348 residues: Isopentenyl-diphosphate delta-isomerase (348 aa).

11–12 (RK) is a binding site for substrate. FMN is bound by residues 70–72 (AMT), S100, and N131. 100–102 (SQR) lines the substrate pocket. Residue Q165 participates in substrate binding. Residue E166 participates in Mg(2+) binding. FMN is bound by residues K197, T231, 278-280 (GIR), and 299-300 (AR).

This sequence belongs to the IPP isomerase type 2 family. In terms of assembly, homooctamer. Dimer of tetramers. FMN serves as cofactor. NADPH is required as a cofactor. The cofactor is Mg(2+).

The protein resides in the cytoplasm. The enzyme catalyses isopentenyl diphosphate = dimethylallyl diphosphate. In terms of biological role, involved in the biosynthesis of isoprenoids. Catalyzes the 1,3-allylic rearrangement of the homoallylic substrate isopentenyl (IPP) to its allylic isomer, dimethylallyl diphosphate (DMAPP). This is Isopentenyl-diphosphate delta-isomerase from Mycobacterium marinum (strain ATCC BAA-535 / M).